The sequence spans 269 residues: uncharacterized protein (269 aa).

Residues valine 3–alanine 66 adopt a coiled-coil conformation. Residues alanine 83–glutamate 142 are disordered. Residues glutamate 94–glutamate 111 show a composition bias toward acidic residues. A compositionally biased stretch (basic and acidic residues) spans proline 112–serine 136.

This is an uncharacterized protein from Archaeoglobus fulgidus (strain ATCC 49558 / DSM 4304 / JCM 9628 / NBRC 100126 / VC-16).